We begin with the raw amino-acid sequence, 143 residues long: uncharacterized protein (143 aa).

One can recognise an HTH cro/C1-type domain in the interval 24–78 (IRQRREWQNMSQTTLGEAIGVTFQQVQKYEKGVNRVGAGRLQQISKALKVEPSYF). A DNA-binding region (H-T-H motif) is located at residues 35–54 (QTTLGEAIGVTFQQVQKYEK).

This is an uncharacterized protein from Sinorhizobium fredii (strain NBRC 101917 / NGR234).